A 756-amino-acid polypeptide reads, in one-letter code: MYNSSTNHHEGAPTSGHGYYMSQQQDQQHQQQQQYANEMNPYQQIPRPPAAGFSSNYMKEQGSHQSLQEHLQRETGNLGSGFTDVPALNYPATPPPHNNYAASNQMINTPPPSMGGLYRHNNNSQSMVQNGNGSGNAQLPQLSPGQYSIESEYNQNLNGSSSSSPFHQPQTLRSNGSYSSGLRSVKSFQRLQQEQENVQVQQQLSQAQQQNSRQQQQQLQYQQQQQQQQQQQHMQIQQQQQQQQQQQQSQSPVQSGFNNGTISNYMYFERRPDLLTKGTQDKAAAVKLKIENFYQSSVKYAIERNERRVELETELTSHNWSEERKSRQLSSLGKKESQFLRLRRTRLSLEDFHTVKVIGKGAFGEVRLVQKKDTGKIYAMKTLLKSEMYKKDQLAHVKAERDVLAGSDSPWVVSLYYSFQDAQYLYLIMEFLPGGDLMTMLIRWQLFTEDVTRFYMAECILAIETIHKLGFIHRDIKPDNILIDIRGHIKLSDFGLSTGFHKTHDSNYYKKLLQQDEATNGISKPGTYNANTTDTANKRQTMVVDSISLTMSNRQQIQTWRKSRRLMAYSTVGTPDYIAPEIFLYQGYGQECDWWSLGAIMYECLIGWPPFCSETPQETYRKIMNFEQTLQFPDDIHISYEAEDLIRRLLTHADQRLGRHGGADEIKSHPFFRGVDWNTIRQVEAPYIPKLSSITDTRFFPTDELENVPDSPAMAQAAKQREQMTKQGGSAPVKEDLPFIGYTYSRFDYLTRKNAL.

Disordered stretches follow at residues 1 to 180 (MYNS…SYSS) and 242 to 261 (QQQQQQQSQSPVQSGFNNGT). Residues 23-34 (QQQDQQHQQQQQ) show a composition bias toward low complexity. Positions 53-77 (FSSNYMKEQGSHQSLQEHLQRETGN) are enriched in polar residues. At Thr109 the chain carries Phosphothreonine. The span at 120-180 (HNNNSQSMVQ…TLRSNGSYSS (61 aa)) shows a compositional bias: polar residues. Positions 242–255 (QQQQQQQSQSPVQS) are enriched in low complexity. The region spanning 352–672 (FHTVKVIGKG…ADEIKSHPFF (321 aa)) is the Protein kinase domain. ATP-binding positions include 358–366 (IGKGAFGEV) and Lys381. The active-site Proton acceptor is the Asp475. In terms of domain architecture, AGC-kinase C-terminal spans 673–754 (RGVDWNTIRQ…SRFDYLTRKN (82 aa)). Residues 707–732 (NVPDSPAMAQAAKQREQMTKQGGSAP) are disordered.

It belongs to the protein kinase superfamily. STE Ser/Thr protein kinase family. COT1 subfamily. In terms of assembly, associates with PAG1/TAO3 and interacts with MOB2.

The enzyme catalyses L-seryl-[protein] + ATP = O-phospho-L-seryl-[protein] + ADP + H(+). The catalysed reaction is L-threonyl-[protein] + ATP = O-phospho-L-threonyl-[protein] + ADP + H(+). Protein kinase that seems to play a role in the regulation of cell morphogenesis and proliferation. The protein is Serine/threonine-protein kinase CBK1 (CBK1) of Saccharomyces cerevisiae (strain ATCC 204508 / S288c) (Baker's yeast).